We begin with the raw amino-acid sequence, 313 residues long: MNWLTNVVRPKIRNMLRRETPENLWIKCPDSGQLVFYKDVEANQFVIPGSNYHMRMGAVARLKSIFDNETWYDVALPDVTPDPLKFRDEKKYVDRIKDARARTNLNDAIKVGYGKLEGAAVVIAVQDFDFMGGSLGMAAGEAIVRGLELAVEKKSPFIVFAASGGARMQEGILSLMQMPRTTVAVQMLREAKQPYIVVLTNPTTGGVTASYAMLGDVQIAEPGALIGFAGARVIEQTIREKLPEGFQRAEYLKEHGMVDMVVHRHDLRPTLARLCRLLTKAPALETASKSVQPVVSPAQIVSASETAPAAPHA.

The 270-residue stretch at 24 to 293 folds into the CoA carboxyltransferase N-terminal domain; sequence LWIKCPDSGQ…LETASKSVQP (270 aa).

The protein belongs to the AccD/PCCB family. As to quaternary structure, acetyl-CoA carboxylase is a heterohexamer composed of biotin carboxyl carrier protein (AccB), biotin carboxylase (AccC) and two subunits each of ACCase subunit alpha (AccA) and ACCase subunit beta (AccD).

The protein localises to the cytoplasm. It carries out the reaction N(6)-carboxybiotinyl-L-lysyl-[protein] + acetyl-CoA = N(6)-biotinyl-L-lysyl-[protein] + malonyl-CoA. It functions in the pathway lipid metabolism; malonyl-CoA biosynthesis; malonyl-CoA from acetyl-CoA: step 1/1. In terms of biological role, component of the acetyl coenzyme A carboxylase (ACC) complex. Biotin carboxylase (BC) catalyzes the carboxylation of biotin on its carrier protein (BCCP) and then the CO(2) group is transferred by the transcarboxylase to acetyl-CoA to form malonyl-CoA. In Bradyrhizobium diazoefficiens (strain JCM 10833 / BCRC 13528 / IAM 13628 / NBRC 14792 / USDA 110), this protein is Acetyl-coenzyme A carboxylase carboxyl transferase subunit beta.